Here is a 332-residue protein sequence, read N- to C-terminus: Glyceraldehyde-3-phosphate dehydrogenase 2 (332 aa).

Residues 11-12 (RI), Asp-32, and Arg-77 each bind NAD(+). Residues 148–150 (SCT), Thr-179, 208–209 (TG), and Arg-231 contribute to the D-glyceraldehyde 3-phosphate site. The Nucleophile role is filled by Cys-149. Residue Asn-313 participates in NAD(+) binding.

It belongs to the glyceraldehyde-3-phosphate dehydrogenase family. As to quaternary structure, homotetramer.

The protein resides in the cytoplasm. It carries out the reaction D-glyceraldehyde 3-phosphate + phosphate + NAD(+) = (2R)-3-phospho-glyceroyl phosphate + NADH + H(+). The protein operates within carbohydrate degradation; glycolysis; pyruvate from D-glyceraldehyde 3-phosphate: step 1/5. This is Glyceraldehyde-3-phosphate dehydrogenase 2 (Gapdh2) from Drosophila pseudoobscura pseudoobscura (Fruit fly).